The primary structure comprises 341 residues: N-acetyl-gamma-glutamyl-phosphate reductase (341 aa).

Cys-149 is an active-site residue.

Belongs to the NAGSA dehydrogenase family. Type 1 subfamily.

The protein resides in the cytoplasm. The catalysed reaction is N-acetyl-L-glutamate 5-semialdehyde + phosphate + NADP(+) = N-acetyl-L-glutamyl 5-phosphate + NADPH + H(+). The protein operates within amino-acid biosynthesis; L-arginine biosynthesis; N(2)-acetyl-L-ornithine from L-glutamate: step 3/4. Its function is as follows. Catalyzes the NADPH-dependent reduction of N-acetyl-5-glutamyl phosphate to yield N-acetyl-L-glutamate 5-semialdehyde. This Methanocaldococcus jannaschii (strain ATCC 43067 / DSM 2661 / JAL-1 / JCM 10045 / NBRC 100440) (Methanococcus jannaschii) protein is N-acetyl-gamma-glutamyl-phosphate reductase.